Consider the following 421-residue polypeptide: Serine--tRNA ligase (421 aa).

Residue 230–232 (TAE) participates in L-serine binding. Position 261–263 (261–263 (RRE)) interacts with ATP. Glu284 contributes to the L-serine binding site. 348–351 (EISS) is an ATP binding site. Ser383 contributes to the L-serine binding site.

Belongs to the class-II aminoacyl-tRNA synthetase family. Type-1 seryl-tRNA synthetase subfamily. Homodimer. The tRNA molecule binds across the dimer.

The protein localises to the cytoplasm. It carries out the reaction tRNA(Ser) + L-serine + ATP = L-seryl-tRNA(Ser) + AMP + diphosphate + H(+). The catalysed reaction is tRNA(Sec) + L-serine + ATP = L-seryl-tRNA(Sec) + AMP + diphosphate + H(+). Its pathway is aminoacyl-tRNA biosynthesis; selenocysteinyl-tRNA(Sec) biosynthesis; L-seryl-tRNA(Sec) from L-serine and tRNA(Sec): step 1/1. Functionally, catalyzes the attachment of serine to tRNA(Ser). Is also able to aminoacylate tRNA(Sec) with serine, to form the misacylated tRNA L-seryl-tRNA(Sec), which will be further converted into selenocysteinyl-tRNA(Sec). This is Serine--tRNA ligase from Finegoldia magna (strain ATCC 29328 / DSM 20472 / WAL 2508) (Peptostreptococcus magnus).